Reading from the N-terminus, the 315-residue chain is Calumenin (315 aa).

A signal peptide spans 1–19; it reads MDTRRLLLCLCLWVACVVS. 6 EF-hand domains span residues 68 to 103, 104 to 139, 151 to 186, 188 to 223, 229 to 264, and 265 to 300; these read ESKE…AQKK, YVYD…TYLD, QMMV…EEFD, MKDI…HDGD, WVKT…SDYD, and HAEA…FVGS. Residues aspartate 81, aspartate 83, aspartate 85, tyrosine 87, glutamate 92, aspartate 117, asparagine 119, aspartate 121, and glutamate 128 each contribute to the Ca(2+) site. N-linked (GlcNAc...) asparagine glycosylation is present at asparagine 131. Residues aspartate 164, aspartate 166, aspartate 168, glutamate 175, aspartate 201, asparagine 203, aspartate 205, glutamate 212, aspartate 242, asparagine 244, aspartate 246, lysine 248, glutamate 253, aspartate 278, asparagine 280, aspartate 282, lysine 284, and glutamate 289 each contribute to the Ca(2+) site. Positions 312-315 match the Prevents secretion from ER motif; the sequence is HDEF.

The protein belongs to the CREC family. In terms of assembly, interacts with ggcx.

The protein resides in the endoplasmic reticulum membrane. It is found in the golgi apparatus. It localises to the secreted. Its subcellular location is the melanosome. The protein localises to the sarcoplasmic reticulum lumen. In terms of biological role, involved in regulation of vitamin K-dependent carboxylation of multiple N-terminal glutamate residues. Seems to inhibit gamma-carboxylase ggcx. Binds 7 calcium ions with a low affinity. The polypeptide is Calumenin (calu) (Xenopus tropicalis (Western clawed frog)).